The following is a 2554-amino-acid chain: Protein sevenless (2554 aa).

A compositionally biased stretch (polar residues) spans 1-10 (MTMFWQQNVD). Residues 1 to 25 (MTMFWQQNVDHQSDEQDKQAKGAAP) are disordered. The Extracellular segment spans residues 1-2123 (MTMFWQQNVD…AEPFVSPEKR (2123 aa)). The span at 11-20 (HQSDEQDKQA) shows a compositional bias: basic and acidic residues. A glycan (N-linked (GlcNAc...) asparagine) is linked at N30. Low complexity predominate over residues 51-70 (NQQAPGTSSSSSNSQNASPS). Residues 51–75 (NQQAPGTSSSSSNSQNASPSKIVVR) are disordered. N-linked (GlcNAc...) asparagine glycosylation occurs at N129. Positions 181-208 (SRPQSTMAHHPDDRDRDRDPSEEQHGVD) are disordered. Basic and acidic residues predominate over residues 189-208 (HHPDDRDRDRDPSEEQHGVD). In terms of domain architecture, Fibronectin type-III 1 spans 440–533 (APVIEHLMGL…GFVQTHSARN (94 aa)). N481, N505, N617, and N647 each carry an N-linked (GlcNAc...) asparagine glycan. One can recognise a Fibronectin type-III 2 domain in the interval 824–924 (AGGKPHSLKA…EPLAARTWPL (101 aa)). N-linked (GlcNAc...) asparagine glycosylation is present at N966. Residues 1010–1053 (GRVYWTDLARNCVVRMDPWSGSRELLPVFEANFLALDPRQGHLY) form an LDL-receptor class B repeat. 2 consecutive Fibronectin type-III domains span residues 1202-1290 (LPDS…TPPV) and 1294-1397 (QPRR…VAPE). N-linked (GlcNAc...) asparagine glycosylation is found at N1228, N1313, N1353, N1550, N1557, N1639, N1725, N1756, N1804, N1889, N1947, and N2073. Fibronectin type-III domains are found at residues 1801–1901 (PPRN…SFAE), 1902–1988 (LPEL…VYET), and 1995–2117 (QPGK…AEPF). A helical membrane pass occupies residues 2124–2147 (GSLVLAIIAPAAIVSSCVLALVLV). The Cytoplasmic portion of the chain corresponds to 2148 to 2554 (RKVQKRRLRA…LYANEGVSRL (407 aa)). Residues 2209–2485 (LKLLRFLGSG…RCYNTLHAIS (277 aa)) enclose the Protein kinase domain. Residues 2215 to 2223 (LGSGAFGEV) and K2242 contribute to the ATP site. Catalysis depends on D2343, which acts as the Proton acceptor. At Y2380 the chain carries Phosphotyrosine; by autocatalysis. A compositionally biased stretch (basic and acidic residues) spans 2515–2527 (GQPLEEHREHNER). Positions 2515 to 2534 (GQPLEEHREHNERPEDENLT) are disordered.

This sequence belongs to the protein kinase superfamily. Tyr protein kinase family. Insulin receptor subfamily. As to quaternary structure, may form a complex with drk and Sos. Binds the phosphotyrosine interaction domain (PID) of Dab.

Its subcellular location is the cell membrane. It catalyses the reaction L-tyrosyl-[protein] + ATP = O-phospho-L-tyrosyl-[protein] + ADP + H(+). In terms of biological role, receptor for an extracellular signal required to instruct a cell to differentiate into an R7 photoreceptor. The ligand for sev is the boss (bride of sevenless) protein on the surface of the neighboring R8 cell. The chain is Protein sevenless (sev) from Drosophila melanogaster (Fruit fly).